The sequence spans 154 residues: N-acetylneuraminate anomerase NanQ (154 aa).

It belongs to the NanQ anomerase family. It depends on Zn(2+) as a cofactor.

The protein localises to the cytoplasm. The catalysed reaction is N-acetyl-alpha-neuraminate = aceneuramate. It carries out the reaction N-acetyl-beta-neuraminate = aceneuramate. Inhibited by 1,10-phenanthroline. Functionally, opens both the alpha- and beta-forms of N-acetylneuraminate (sialic acid; Neu5Ac) to provide aceneuramate, the preferred substrate for NanA. Has preferential activity on the beta-anomer rather than the alpha-anomer. Accelerates a reaction that is spontaneous at slightly alkaline pH, facilitates the reaction at acidic pH. This is N-acetylneuraminate anomerase NanQ from Escherichia coli (strain K12).